Here is a 399-residue protein sequence, read N- to C-terminus: Cytohesin-3 (399 aa).

Positions 14-61 (EDLSLEEREELLDIRRRKKELIDDIERLKYEIAEVMTEIDNLTSVEES) form a coiled coil. The 130-residue stretch at 77–206 (FNMDPKKGIQ…IIMLNTSLHN (130 aa)) folds into the SEC7 domain. Positions 264–380 (NPDREGWLLK…WMKSIKASIS (117 aa)) constitute a PH domain. A 1,2-diacyl-sn-glycero-3-phospho-(1D-myo-inositol-3,4,5-trisphosphate)-binding positions include 273 to 280 (KLGGRVKT), Arg284, Tyr295, Arg305, and Asn354. The interval 391-399 (RKRRIANKK) is C-terminal autoinhibitory region.

As to quaternary structure, interacts with TAMALIN. Interacts with FRMD4A. Interacts with FRMD4B.

The protein localises to the cytoplasm. The protein resides in the cytosol. It is found in the cell membrane. Its subcellular location is the cell junction. It localises to the adherens junction. The protein localises to the tight junction. Its function is as follows. Promotes guanine-nucleotide exchange on ARF1. Promotes the activation of ARF factors through replacement of GDP with GTP. Plays a role in the epithelial polarization. The chain is Cytohesin-3 (Cyth3) from Mus musculus (Mouse).